We begin with the raw amino-acid sequence, 269 residues long: Formamidopyrimidine-DNA glycosylase (269 aa).

The Schiff-base intermediate with DNA role is filled by Pro-2. Catalysis depends on Glu-3, which acts as the Proton donor. Lys-57 acts as the Proton donor; for beta-elimination activity in catalysis. DNA is bound by residues His-90, Arg-109, and Arg-150. The FPG-type zinc-finger motif lies at 235–269 (NVYGRKGEPCEACGKAIESKVIGQRNTFFCTRCQR). Arg-259 acts as the Proton donor; for delta-elimination activity in catalysis.

This sequence belongs to the FPG family. Monomer. Zn(2+) is required as a cofactor.

The catalysed reaction is Hydrolysis of DNA containing ring-opened 7-methylguanine residues, releasing 2,6-diamino-4-hydroxy-5-(N-methyl)formamidopyrimidine.. The enzyme catalyses 2'-deoxyribonucleotide-(2'-deoxyribose 5'-phosphate)-2'-deoxyribonucleotide-DNA = a 3'-end 2'-deoxyribonucleotide-(2,3-dehydro-2,3-deoxyribose 5'-phosphate)-DNA + a 5'-end 5'-phospho-2'-deoxyribonucleoside-DNA + H(+). Functionally, involved in base excision repair of DNA damaged by oxidation or by mutagenic agents. Acts as a DNA glycosylase that recognizes and removes damaged bases. Has a preference for oxidized purines, such as 7,8-dihydro-8-oxoguanine (8-oxoG). Has AP (apurinic/apyrimidinic) lyase activity and introduces nicks in the DNA strand. Cleaves the DNA backbone by beta-delta elimination to generate a single-strand break at the site of the removed base with both 3'- and 5'-phosphates. The chain is Formamidopyrimidine-DNA glycosylase from Alteromonas mediterranea (strain DSM 17117 / CIP 110805 / LMG 28347 / Deep ecotype).